The following is a 102-amino-acid chain: MAKKSMIERNLRRIKLCDQYKEKREKLKSIINNKNLSIVERFTAQNKLIKKLPRNSSKTKIRNRCALTGRPRGVYRKFGLCRIVLRDLCSFGQIPGVTKSSW.

Belongs to the universal ribosomal protein uS14 family. Part of the 30S ribosomal subunit. Contacts proteins S3 and S10.

Its function is as follows. Binds 16S rRNA, required for the assembly of 30S particles and may also be responsible for determining the conformation of the 16S rRNA at the A site. The sequence is that of Small ribosomal subunit protein uS14 from Wolbachia pipientis wMel.